Reading from the N-terminus, the 358-residue chain is DnaJ homolog subfamily C member 18 (358 aa).

Positions 82-146 (NYYEILGVSR…DKRLRYDEYG (65 aa)) constitute a J domain. Residues 228–248 (AFIQLLPVLVIVIISVITQLL) form a helical membrane-spanning segment.

Its subcellular location is the endoplasmic reticulum membrane. Functionally, (Microbial infection) In case of infection by polyomavirus, involved in the virus endoplasmic reticulum membrane penetration and infection. Regulates the recruitment of DNAJB12:DNAJB14 into SV40-induced foci and all cooperate to guide SV40 across the endoplasmic reticulum membrane. The foci represent the site from which SV40 penetrates into the cytosol. The chain is DnaJ homolog subfamily C member 18 from Homo sapiens (Human).